A 111-amino-acid polypeptide reads, in one-letter code: Probable 4-amino-4-deoxy-L-arabinose-phosphoundecaprenol flippase subunit ArnE (111 aa).

Residues 1-35 are Cytoplasmic-facing; it reads MIWLTLVFASLLSVAGQLCQKQATCFAAVNKRRKH. The helical transmembrane segment at 36-56 threads the bilayer; the sequence is IVLWLGLALACLGLAMVLWLL. An EamA domain is found at 40–109; the sequence is LGLALACLGL…IIGGIVILGS (70 aa). Topologically, residues 57-60 are periplasmic; sequence VLQN. A helical membrane pass occupies residues 61–81; sequence VPVGIAYPMLSLNFVWVTLAA. Over 82 to 87 the chain is Cytoplasmic; it reads VKLWHE. The chain crosses the membrane as a helical span at residues 88 to 108; sequence PVSLRHWCGVAFIIGGIVILG. Residues 109–111 are Periplasmic-facing; it reads STV.

The protein belongs to the ArnE family. Heterodimer of ArnE and ArnF.

The protein localises to the cell inner membrane. The protein operates within bacterial outer membrane biogenesis; lipopolysaccharide biosynthesis. Translocates 4-amino-4-deoxy-L-arabinose-phosphoundecaprenol (alpha-L-Ara4N-phosphoundecaprenol) from the cytoplasmic to the periplasmic side of the inner membrane. The polypeptide is Probable 4-amino-4-deoxy-L-arabinose-phosphoundecaprenol flippase subunit ArnE (Escherichia coli (strain UTI89 / UPEC)).